We begin with the raw amino-acid sequence, 391 residues long: Elongation factor Tu (391 aa).

A tr-type G domain is found at 10 to 201 (KPHVNIGTIG…AVDEYIPTPA (192 aa)). The G1 stretch occupies residues 19–26 (GHVDHGKT). Residue 19–26 (GHVDHGKT) participates in GTP binding. Threonine 26 is a Mg(2+) binding site. The interval 55–59 (GITIS) is G2. The G3 stretch occupies residues 76–79 (DCPG). Residues 76–80 (DCPGH) and 131–134 (NKVD) each bind GTP. Positions 131–134 (NKVD) are G4. Positions 169 to 171 (SAL) are G5.

This sequence belongs to the TRAFAC class translation factor GTPase superfamily. Classic translation factor GTPase family. EF-Tu/EF-1A subfamily. Monomer.

It is found in the cytoplasm. The enzyme catalyses GTP + H2O = GDP + phosphate + H(+). GTP hydrolase that promotes the GTP-dependent binding of aminoacyl-tRNA to the A-site of ribosomes during protein biosynthesis. The protein is Elongation factor Tu of Jannaschia sp. (strain CCS1).